Reading from the N-terminus, the 1084-residue chain is MALPPVKIASRPASPTPSHHHQQAAAASSSSSSSSSHHPPPRIAARPIAPADRSPERVSQHSRGASVHDADSLPPIRPRGSRPSSPSGHAADRAPSSHHNASSTATVPARSTARSLFRDPRTLHPAGRSQSPIAAFRNRSQSSERSRLGPSRSQPNSPLLQSSSLRHHSDATGVHLPPISSLSKELVSDHPDCFAHRRRTPTTSPRATARLHMGNTFRDSSPAASSGSPATMRHDHLAYRHEHSAEEHAKMQRYSDEHPRAMNPTSRASYEHESRGMPYRDSYSAPSRAIEASYHANGARPVHHADSSTNSPQYVPGDVYEHEGSGSPPAAHHAGMRCSNCGVTSTPLWRRAPDGSTICNACGLYIKSHSTHRSASNRLSGSDASPPTHEAKLAAAGPSCSREDDPKSGSCPGDGLCNGTGGTASCSGCPAYNNNLSHALKVSKRESQTSEDPPPARTAERAPPVAEEKMDDDKSVVGALRCTNCQTTTTPLWRRDEDGNNICNACGLYHKLHGTHRPIGMKKSVIKRRKRIPANATAQPTHILDVIPVQMNANGQPVIAPAAGRNAGDSTPKSTESRRASKKSSLTSEQAMREARDREAAMLLMEVGAGARSRNSAQEDDRIHQNGALATSTSFHHDFHSARAGADTARTSHPDDSRSSKRPRQSYPLAPREAYDERDVSAIASPPAYNETHAAGATRSQRSQRSPVDAPLTDRLGRSELHGESSHGTSNAPEHAARASASDGARLGSVVPHHHHHHHHHHANHASHAVHHGHHHHHHHPVTVSASSHGHAGQAPSGMTKLSEVERLRDELLFERRRIDEVLRRAEAILASARAGNFHVEAAGPSTSGLRNGHEASHESPPTGSAQGSPGADARGTRSGHDSIKQEAPDAAPRRSKAFSNSSSSSEKDELESPPPSAHQQLASQPLVAATGAQPASRRNSFEQRMASLPVMAAVPLKRSSPPSTVSNPADNRPLSIAPQPARKATAWGIDTRSTPAASPRSGEKRARADEMDEDDDHWNWDNLYGKAKLEKAGDWRGFARPVEDRRSQSKSNGVTRRESSSTPIAARLPVASSPSQAVSAPRT.

Disordered regions lie at residues 1 to 164 (MALP…QSSS), 245 to 283 (AEEHAKMQRYSDEHPRAMNPTSRASYEHESRGMPYRDSY), and 300 to 337 (RPVHHADSSTNSPQYVPGDVYEHEGSGSPPAAHHAGMR). Low complexity predominate over residues 23–51 (QAAAASSSSSSSSSHHPPPRIAARPIAPA). Polar residues-rich tracts occupy residues 97–106 (SHHNASSTAT) and 128–141 (RSQSPIAAFRNRSQ). The span at 150 to 164 (PSRSQPNSPLLQSSS) shows a compositional bias: low complexity. A compositionally biased stretch (basic and acidic residues) spans 245 to 260 (AEEHAKMQRYSDEHPR). A GATA-type 1 zinc finger spans residues 338–362 (CSNCGVTSTPLWRRAPDGSTICNAC). 2 disordered regions span residues 372–405 (HRSASNRLSGSDASPPTHEAKLAAAGPSCSREDD) and 442–472 (VSKRESQTSEDPPPARTAERAPPVAEEKMDD). Polar residues predominate over residues 373-385 (RSASNRLSGSDAS). The segment at 482–506 (CTNCQTTTTPLWRRDEDGNNICNAC) adopts a GATA-type 2 zinc-finger fold. 6 disordered regions span residues 559 to 595 (IAPAAGRNAGDSTPKSTESRRASKKSSLTSEQAMREA), 643 to 679 (RAGADTARTSHPDDSRSSKRPRQSYPLAPREAYDERD), 692 to 803 (THAA…TKLS), 841 to 940 (EAAG…SRRN), 953 to 1019 (AAVP…DDHW), and 1040 to 1084 (ARPV…APRT). Composition is skewed to basic and acidic residues over residues 650–659 (RTSHPDDSRS) and 715–725 (RLGRSELHGES). The span at 752–781 (PHHHHHHHHHHANHASHAVHHGHHHHHHHP) shows a compositional bias: basic residues. The segment covering 875-888 (RGTRSGHDSIKQEA) has biased composition (basic and acidic residues). A compositionally biased stretch (polar residues) spans 961 to 970 (SPPSTVSNPA). Residues 1070 to 1084 (PVASSPSQAVSAPRT) are compositionally biased toward low complexity.

The protein localises to the nucleus. Involved in the regulation of secreted ferrichrome-type siderophores. Acts directly or indirectly to repress the biosynthesis of siderophores. This chain is Siderophore biosynthesis regulatory protein URBS1 (URBS1), found in Mycosarcoma maydis (Corn smut fungus).